Reading from the N-terminus, the 391-residue chain is Formate-dependent phosphoribosylglycinamide formyltransferase (391 aa).

N(1)-(5-phospho-beta-D-ribosyl)glycinamide contacts are provided by residues 20–21 (EL) and Glu-80. ATP is bound by residues Arg-112, Lys-153, 158–163 (SSGKGQ), 193–196 (EGFI), and Glu-201. One can recognise an ATP-grasp domain in the interval 117–306 (RLAAEELGLT…EFALHVRAFT (190 aa)). Residues Glu-265 and Glu-277 each coordinate Mg(2+). N(1)-(5-phospho-beta-D-ribosyl)glycinamide is bound by residues Asp-284, Lys-354, and 361-362 (RR).

Belongs to the PurK/PurT family. As to quaternary structure, homodimer.

The catalysed reaction is N(1)-(5-phospho-beta-D-ribosyl)glycinamide + formate + ATP = N(2)-formyl-N(1)-(5-phospho-beta-D-ribosyl)glycinamide + ADP + phosphate + H(+). It functions in the pathway purine metabolism; IMP biosynthesis via de novo pathway; N(2)-formyl-N(1)-(5-phospho-D-ribosyl)glycinamide from N(1)-(5-phospho-D-ribosyl)glycinamide (formate route): step 1/1. In terms of biological role, involved in the de novo purine biosynthesis. Catalyzes the transfer of formate to 5-phospho-ribosyl-glycinamide (GAR), producing 5-phospho-ribosyl-N-formylglycinamide (FGAR). Formate is provided by PurU via hydrolysis of 10-formyl-tetrahydrofolate. This Vibrio vulnificus (strain CMCP6) protein is Formate-dependent phosphoribosylglycinamide formyltransferase.